The sequence spans 43 residues: Metallothionein-2 (43 aa).

Residue Met-1 is modified to Blocked amino end (Met).

It belongs to the metallothionein superfamily. Type 5 family.

Functionally, this protein binds cations of several transition elements. Thought to be involved in metal ion homeostasis. The sequence is that of Metallothionein-2 (MtnB) from Drosophila melanogaster (Fruit fly).